We begin with the raw amino-acid sequence, 206 residues long: ATP-dependent Clp protease proteolytic subunit (206 aa).

Serine 110 acts as the Nucleophile in catalysis. Histidine 135 is a catalytic residue.

The protein belongs to the peptidase S14 family. In terms of assembly, fourteen ClpP subunits assemble into 2 heptameric rings which stack back to back to give a disk-like structure with a central cavity, resembling the structure of eukaryotic proteasomes.

It localises to the cytoplasm. It catalyses the reaction Hydrolysis of proteins to small peptides in the presence of ATP and magnesium. alpha-casein is the usual test substrate. In the absence of ATP, only oligopeptides shorter than five residues are hydrolyzed (such as succinyl-Leu-Tyr-|-NHMec, and Leu-Tyr-Leu-|-Tyr-Trp, in which cleavage of the -Tyr-|-Leu- and -Tyr-|-Trp bonds also occurs).. In terms of biological role, cleaves peptides in various proteins in a process that requires ATP hydrolysis. Has a chymotrypsin-like activity. Plays a major role in the degradation of misfolded proteins. This Edwardsiella ictaluri (strain 93-146) protein is ATP-dependent Clp protease proteolytic subunit.